The primary structure comprises 503 residues: Alpha-1,3/1,6-mannosyltransferase ALG2 (503 aa).

Residues asparagine 59, asparagine 173, asparagine 262, and asparagine 403 are each glycosylated (N-linked (GlcNAc...) asparagine). Transmembrane regions (helical) follow at residues leucine 444–glycine 466 and leucine 473–valine 495. N-linked (GlcNAc...) asparagine glycosylation occurs at asparagine 500.

This sequence belongs to the glycosyltransferase group 1 family.

The protein resides in the endoplasmic reticulum membrane. The enzyme catalyses a beta-D-Man-(1-&gt;4)-beta-D-GlcNAc-(1-&gt;4)-alpha-D-GlcNAc-diphospho-di-trans,poly-cis-dolichol + GDP-alpha-D-mannose = an alpha-D-Man-(1-&gt;3)-beta-D-Man-(1-&gt;4)-beta-D-GlcNAc-(1-&gt;4)-alpha-D-GlcNAc-diphospho-di-trans,poly-cis-dolichol + GDP + H(+). It catalyses the reaction an alpha-D-Man-(1-&gt;3)-beta-D-Man-(1-&gt;4)-beta-D-GlcNAc-(1-&gt;4)-alpha-D-GlcNAc-diphospho-di-trans,poly-cis-dolichol + GDP-alpha-D-mannose = an alpha-D-Man-(1-&gt;3)-[alpha-D-Man-(1-&gt;6)]-beta-D-Man-(1-&gt;4)-beta-D-GlcNAc-(1-&gt;4)-alpha-D-GlcNAc-diphospho-di-trans,poly-cis-dolichol + GDP + H(+). It participates in protein modification; protein glycosylation. Mannosylates Man(2)GlcNAc(2)-dolichol diphosphate and Man(1)GlcNAc(2)-dolichol diphosphate to form Man(3)GlcNAc(2)-dolichol diphosphate. This chain is Alpha-1,3/1,6-mannosyltransferase ALG2 (ALG2), found in Kluyveromyces lactis (strain ATCC 8585 / CBS 2359 / DSM 70799 / NBRC 1267 / NRRL Y-1140 / WM37) (Yeast).